The chain runs to 539 residues: 4-hydroxybenzoate--CoA/benzoate--CoA ligase (539 aa).

The protein belongs to the ATP-dependent AMP-binding enzyme family. Benzoate-CoA ligase subfamily. Homodimer. The N-terminus is blocked.

It carries out the reaction 4-hydroxybenzoate + ATP + CoA = 4-hydroxybenzoyl-CoA + AMP + diphosphate. It catalyses the reaction benzoate + ATP + CoA = benzoyl-CoA + AMP + diphosphate. Functionally, catalyzes the ligation of 4-hydroxybenzoate, benzoate or cyclohex-1,4-dienecarboxylate and CoA at the expense of ATP. The enzyme shows low activity towards cyclo-2,5-dienecarboxylate, 4-fluorobenzoate, 4-chlorobenzoate and 2-methoxybenzoate. This Rhodopseudomonas palustris (strain ATCC BAA-98 / CGA009) protein is 4-hydroxybenzoate--CoA/benzoate--CoA ligase (hbaA).